The following is a 387-amino-acid chain: Galactokinase (387 aa).

33–36 (EHID) serves as a coordination point for substrate. ATP contacts are provided by residues S67 and 124–130 (GAGLSSS). Mg(2+) is bound by residues S130 and E162. Catalysis depends on D174, which acts as the Proton acceptor. A substrate-binding site is contributed by Y224.

It belongs to the GHMP kinase family. GalK subfamily.

Its subcellular location is the cytoplasm. It catalyses the reaction alpha-D-galactose + ATP = alpha-D-galactose 1-phosphate + ADP + H(+). Its pathway is carbohydrate metabolism; galactose metabolism. Catalyzes the transfer of the gamma-phosphate of ATP to D-galactose to form alpha-D-galactose-1-phosphate (Gal-1-P). The protein is Galactokinase of Clostridium perfringens (strain SM101 / Type A).